The sequence spans 382 residues: Na(+)/H(+) antiporter NhaA (382 aa).

The next 11 helical transmembrane spans lie at alanine 14–phenylalanine 34, methionine 49–leucine 69, isoleucine 87–phenylalanine 107, glycine 117–glycine 137, valine 146–phenylalanine 166, leucine 171–serine 191, phenylalanine 205–leucine 225, alanine 247–isoleucine 267, valine 285–valine 305, isoleucine 321–leucine 341, and leucine 356–serine 376.

It belongs to the NhaA Na(+)/H(+) (TC 2.A.33) antiporter family.

The protein resides in the cell inner membrane. The enzyme catalyses Na(+)(in) + 2 H(+)(out) = Na(+)(out) + 2 H(+)(in). Functionally, na(+)/H(+) antiporter that extrudes sodium in exchange for external protons. This chain is Na(+)/H(+) antiporter NhaA, found in Aliivibrio salmonicida (strain LFI1238) (Vibrio salmonicida (strain LFI1238)).